The primary structure comprises 367 residues: tRNA pseudouridine synthase D (367 aa).

Asp80 (nucleophile) is an active-site residue. Residues 156 to 316 (GIPNWFGEQR…LKQERRALRL (161 aa)) form the TRUD domain.

It belongs to the pseudouridine synthase TruD family.

The enzyme catalyses uridine(13) in tRNA = pseudouridine(13) in tRNA. Responsible for synthesis of pseudouridine from uracil-13 in transfer RNAs. The chain is tRNA pseudouridine synthase D from Xanthomonas campestris pv. campestris (strain B100).